The chain runs to 359 residues: Ferredoxin--NADP reductase (359 aa).

Asp48, Gln56, Tyr61, Ala101, Phe139, Asp304, and Ser345 together coordinate FAD. A disordered region spans residues 340–359; it reads VHTHTSNDTNLQSRLHAAAE. A compositionally biased stretch (polar residues) spans 341 to 352; sequence HTHTSNDTNLQS.

Belongs to the ferredoxin--NADP reductase type 2 family. In terms of assembly, homodimer. It depends on FAD as a cofactor.

The catalysed reaction is 2 reduced [2Fe-2S]-[ferredoxin] + NADP(+) + H(+) = 2 oxidized [2Fe-2S]-[ferredoxin] + NADPH. This Ralstonia nicotianae (strain ATCC BAA-1114 / GMI1000) (Ralstonia solanacearum) protein is Ferredoxin--NADP reductase.